The chain runs to 426 residues: Glutamate-1-semialdehyde 2,1-aminomutase (426 aa).

Position 265 is an N6-(pyridoxal phosphate)lysine (K265).

It belongs to the class-III pyridoxal-phosphate-dependent aminotransferase family. HemL subfamily. Requires pyridoxal 5'-phosphate as cofactor.

The protein resides in the cytoplasm. It catalyses the reaction (S)-4-amino-5-oxopentanoate = 5-aminolevulinate. The protein operates within porphyrin-containing compound metabolism; protoporphyrin-IX biosynthesis; 5-aminolevulinate from L-glutamyl-tRNA(Glu): step 2/2. The protein is Glutamate-1-semialdehyde 2,1-aminomutase of Hyperthermus butylicus (strain DSM 5456 / JCM 9403 / PLM1-5).